We begin with the raw amino-acid sequence, 875 residues long: Alanine--tRNA ligase (875 aa).

Zn(2+) is bound by residues histidine 564, histidine 568, cysteine 666, and histidine 670.

This sequence belongs to the class-II aminoacyl-tRNA synthetase family. Homotetramer. Zn(2+) serves as cofactor.

Its subcellular location is the cytoplasm. The enzyme catalyses tRNA(Ala) + L-alanine + ATP = L-alanyl-tRNA(Ala) + AMP + diphosphate. In terms of biological role, catalyzes the attachment of alanine to tRNA(Ala) in a two-step reaction: alanine is first activated by ATP to form Ala-AMP and then transferred to the acceptor end of tRNA(Ala). Also edits incorrectly charged Ser-tRNA(Ala) and Gly-tRNA(Ala) via its editing domain. The chain is Alanine--tRNA ligase from Yersinia enterocolitica serotype O:8 / biotype 1B (strain NCTC 13174 / 8081).